The primary structure comprises 566 residues: Hexose transporter 2 (566 aa).

The disordered stretch occupies residues Met1–Val39. Over residues Glu16 to Gly32 the composition is skewed to polar residues. The Cytoplasmic portion of the chain corresponds to Ser22 to Thr61. Residues Val62 to Thr82 form a helical membrane-spanning segment. Residues Ile83–Thr112 lie on the Extracellular side of the membrane. Asn88 is a glycosylation site (N-linked (GlcNAc...) asparagine). The chain crosses the membrane as a helical span at residues Gly113 to Leu133. At Gly134 to Arg140 the chain is on the cytoplasmic side. The chain crosses the membrane as a helical span at residues Ile141 to Ile161. Over Asp162–Gln166 the chain is Extracellular. Residues Tyr167–Met187 form a helical membrane-spanning segment. Over Leu188–Arg198 the chain is Cytoplasmic. Residues Gly199–Thr219 form a helical membrane-spanning segment. Residues Asn220–Arg233 are Extracellular-facing. A helical transmembrane segment spans residues Val234 to Pro254. The Cytoplasmic portion of the chain corresponds to Glu255–Gln333. Residues Leu334–Met353 form a helical membrane-spanning segment. At Asp354–Phe357 the chain is on the extracellular side. The helical transmembrane segment at Glu358–Val378 threads the bilayer. Topologically, residues Asp379–Lys385 are cytoplasmic. The helical transmembrane segment at Cys386–Val406 threads the bilayer. Topologically, residues Thr407–Met428 are extracellular. A helical membrane pass occupies residues Ile429–Val449. The Cytoplasmic portion of the chain corresponds to Val450–Ala465. The helical transmembrane segment at Ile466 to Thr486 threads the bilayer. The Extracellular portion of the chain corresponds to Ser487–Tyr492. A helical membrane pass occupies residues Tyr493–Pro513. The Cytoplasmic segment spans residues Glu514 to Leu566.

This sequence belongs to the major facilitator superfamily. Sugar transporter (TC 2.A.1.1) family.

The protein resides in the membrane. Its function is as follows. Probable glucose transporter. The sequence is that of Hexose transporter 2 (KHT2) from Kluyveromyces lactis (Yeast).